Here is a 130-residue protein sequence, read N- to C-terminus: Anti-adapter protein IraD (130 aa).

It belongs to the GpW/Gp25 family. IraD subfamily. As to quaternary structure, interacts with RssB.

The protein resides in the cytoplasm. Functionally, inhibits RpoS proteolysis by regulating RssB activity, thereby increasing the stability of the sigma stress factor RpoS during oxidative stress. Its effect on RpoS stability is due to its interaction with RssB, which probably blocks the interaction of RssB with RpoS, and the consequent delivery of the RssB-RpoS complex to the ClpXP protein degradation pathway. This Escherichia coli O45:K1 (strain S88 / ExPEC) protein is Anti-adapter protein IraD.